The following is a 423-amino-acid chain: Probable peptidoglycan glycosyltransferase FtsW (423 aa).

Residues 1–53 lie on the Cytoplasmic side of the membrane; it reads MNLKEKLFPENRLGLNRFWNFSRGGIDNFRTGLRDAVSGVEQTRSRMMEYDQL. Residues 54–74 form a helical membrane-spanning segment; it reads LVWAILSLMLIGLVMVYSASI. Residues 75–88 lie on the Periplasmic side of the membrane; sequence TLADGPKYANYSSN. Residues 89–109 form a helical membrane-spanning segment; it reads FFLIRHMISLAIAIGVGIWAF. Over 110–119 the chain is Cytoplasmic; it reads KIPTKVWDRY. Residues 120-140 traverse the membrane as a helical segment; that stretch reads SPVIFGITVLLLIAVLIPGVG. The Periplasmic portion of the chain corresponds to 141–149; it reads RGVNGAKRW. Residues 150–170 traverse the membrane as a helical segment; the sequence is IPLGLMNFQSSELMKFAAVIF. Over 171–184 the chain is Cytoplasmic; sequence AASYTVQRQEYLHS. The helical transmembrane segment at 185–205 threads the bilayer; that stretch reads FVKGMLPMGIAVALVGGLLMA. Residues 206-208 lie on the Periplasmic side of the membrane; that stretch reads EPD. A helical membrane pass occupies residues 209–229; the sequence is MGAFVVVALIAFGILFLGGIN. The Cytoplasmic segment spans residues 230-231; sequence AK. The helical transmembrane segment at 232–252 threads the bilayer; the sequence is LFGGLIAVGLMSGATMIAFSP. Topologically, residues 253 to 310 are periplasmic; the sequence is LRRGRMLAFMDPWQVDNAANKGYQLTHSLMAFGRGEWFGTGLGGSVEKLHYLPEAHTD. The chain crosses the membrane as a helical span at residues 311-331; that stretch reads FIMAVIGEELGFVGVVVMIFL. Residues 332–359 lie on the Cytoplasmic side of the membrane; that stretch reads FYWIVRRAFLIGRTALQLDRSFAGLAAK. A helical membrane pass occupies residues 360–380; it reads GVAIWIGWQAFINMGVNLGLL. The Periplasmic segment spans residues 381-386; it reads PTKGLT. The helical transmembrane segment at 387-407 threads the bilayer; the sequence is LPLVSYGGSGILMNAVAMAML. Topologically, residues 408-423 are cytoplasmic; sequence LRIDFENRILMRGGKL.

It belongs to the SEDS family. FtsW subfamily.

It localises to the cell inner membrane. The catalysed reaction is [GlcNAc-(1-&gt;4)-Mur2Ac(oyl-L-Ala-gamma-D-Glu-L-Lys-D-Ala-D-Ala)](n)-di-trans,octa-cis-undecaprenyl diphosphate + beta-D-GlcNAc-(1-&gt;4)-Mur2Ac(oyl-L-Ala-gamma-D-Glu-L-Lys-D-Ala-D-Ala)-di-trans,octa-cis-undecaprenyl diphosphate = [GlcNAc-(1-&gt;4)-Mur2Ac(oyl-L-Ala-gamma-D-Glu-L-Lys-D-Ala-D-Ala)](n+1)-di-trans,octa-cis-undecaprenyl diphosphate + di-trans,octa-cis-undecaprenyl diphosphate + H(+). It participates in cell wall biogenesis; peptidoglycan biosynthesis. Its function is as follows. Peptidoglycan polymerase that is essential for cell division. The protein is Probable peptidoglycan glycosyltransferase FtsW of Polynucleobacter necessarius subsp. necessarius (strain STIR1).